The following is a 644-amino-acid chain: Uromodulin (644 aa).

Positions 1–26 (MGQLLSLTWLLLVMVVTPWFTVAGAN) are cleaved as a signal peptide. The EGF-like 1 domain maps to 30–66 (EARRCSECHDNATCVLDGVVTTCSCQAGFTGDGLVCE). Cystine bridges form between Cys34–Cys43, Cys37–Cys52, Cys54–Cys65, Cys71–Cys84, Cys79–Cys93, Cys95–Cys107, Cys113–Cys127, Cys121–Cys136, Cys138–Cys149, Cys151–Cys162, Cys156–Cys173, Cys177–Cys270, Cys198–Cys285, Cys220–Cys258, Cys226–Cys290, Cys251–Cys259, Cys300–Cys309, Cys303–Cys318, Cys320–Cys350, Cys338–Cys428, and Cys369–Cys392. The N-linked (GlcNAc...) asparagine glycan is linked to Asn40. Positions 67–108 (DIDECATPWTHNCSNSICMNTLGSYECSCQDGFRLTPGLGCI) constitute an EGF-like 2; calcium-binding domain. Asn78 carries an N-linked (GlcNAc...) asparagine glycan. Residues 109 to 150 (DVNECTEQGLSNCHSLATCVNTEGSYSCVCPKGYRGDGWYCE) form the EGF-like 3; calcium-binding domain. The segment at 151–174 (CSPGFCEPGLDCLPQGPSGKLVCQ) is beta hairpin. The D10C stretch occupies residues 175–294 (DPCNVYETLT…CNLAYCTDPS (120 aa)). N-linked (GlcNAc...) asparagine glycosylation is present at Asn235. Residue Asn278 is glycosylated (N-linked (GlcNAc...) asparagine). One can recognise an EGF-like 4 domain in the interval 295–326 (SVEGTCEECGVDEDCVSDNGRWRCQCKQDFNV). N-linked (GlcNAc...) asparagine glycosylation is present at Asn325. A ZP-N region spans residues 337–432 (ECEANEIKIS…RINFECSYPL (96 aa)). The region spanning 337 to 592 (ECEANEIKIS…PTCSGTRYRS (256 aa)) is the ZP domain. Residues Asn399 and Asn450 are each glycosylated (N-linked (GlcNAc...) asparagine). Residues 433 to 456 (DMKVSLKTSLQPMVSALNISLGGT) form a flexible ZP-N/ZP-C linker; important for secretion and polymerization into filaments region. The interval 457-467 (GKFTVQMALFQ) is internal hydrophobic patch (IHP). The ZP-C stretch occupies residues 457-592 (GKFTVQMALF…PTCSGTRYRS (136 aa)). Cystine bridges form between Cys509–Cys569, Cys530–Cys585, and Cys574–Cys581. The N-linked (GlcNAc...) asparagine glycan is linked to Asn516. The interval 589 to 592 (RYRS) is essential for cleavage by HPN. Residues 601-609 (VLNLGPITR) are external hydrophobic patch (EHP); regulates polymerization into filaments. Ser615 is lipidated: GPI-anchor amidated serine. The propeptide at 616 to 644 (VSKAASSNLGFLSIWLLLFLSATLTLMVH) is removed in mature form.

As to quaternary structure, homodimer that then polymerizes into long filaments. The filaments can additionally assemble laterally to form a sheet. The filaments consist of a zigzag-shaped backbone with laterally protruding arms which interact with bacterial adhesin fimH. Two fimH molecules can bind to a single UMOD monomer. In terms of processing, N-glycosylated. Post-translationally, proteolytically cleaved at a conserved C-terminal proteolytic cleavage site to generate the secreted form found in urine. This cleavage is catalyzed by HPN. As to expression, expression restricted to the thick ascending limb of the loop of Henle (TALH).

It is found in the apical cell membrane. It localises to the basolateral cell membrane. The protein localises to the cell projection. Its subcellular location is the cilium membrane. The protein resides in the secreted. Functionally, functions in biogenesis and organization of the apical membrane of epithelial cells of the thick ascending limb of Henle's loop (TALH), where it promotes formation of complex filamentous gel-like structure that may play a role in the water barrier permeability. May serve as a receptor for binding and endocytosis of cytokines (IL-1, IL-2) and TNF. Facilitates neutrophil migration across renal epithelia. Its function is as follows. In the urine, may contribute to colloid osmotic pressure, retards passage of positively charged electrolytes, and inhibits formation of liquid containing supersaturated salts and subsequent formation of salt crystals. Protects against urinary tract infections by binding to type 1 fimbriated E.coli. Binds to bacterial adhesin fimH which mediates the stable formation of bacterial aggregates, prevents the binding of E.coli to uroplakins UPK1A and UPK1B which act as urothelial receptors for type I fimbriae, and allows for pathogen clearance through micturation. Also promotes aggregation of other bacteria including K.pneumoniae, P.aeruginosa and S.mitis and so may also protect against other uropathogens. This is Uromodulin (Umod) from Rattus norvegicus (Rat).